The sequence spans 150 residues: Putative pre-16S rRNA nuclease (150 aa).

Belongs to the YqgF nuclease family.

Its subcellular location is the cytoplasm. Could be a nuclease involved in processing of the 5'-end of pre-16S rRNA. In Protochlamydia amoebophila (strain UWE25), this protein is Putative pre-16S rRNA nuclease.